The following is a 52-amino-acid chain: MPQLDTIYILMTHLWAWLMLYLTTQKIKTFIMTSHPMIYHKPNKQTPTPTWL.

Residues 10-30 (LMTHLWAWLMLYLTTQKIKTF) traverse the membrane as a helical segment.

The protein belongs to the ATPase protein 8 family. Component of the ATP synthase complex composed at least of ATP5F1A/subunit alpha, ATP5F1B/subunit beta, ATP5MC1/subunit c (homooctomer), MT-ATP6/subunit a, MT-ATP8/subunit 8, ATP5ME/subunit e, ATP5MF/subunit f, ATP5MG/subunit g, ATP5MK/subunit k, ATP5MJ/subunit j, ATP5F1C/subunit gamma, ATP5F1D/subunit delta, ATP5F1E/subunit epsilon, ATP5PF/subunit F6, ATP5PB/subunit b, ATP5PD/subunit d, ATP5PO/subunit OSCP. ATP synthase complex consists of a soluble F(1) head domain (subunits alpha(3) and beta(3)) - the catalytic core - and a membrane F(0) domain - the membrane proton channel (subunits c, a, 8, e, f, g, k and j). These two domains are linked by a central stalk (subunits gamma, delta, and epsilon) rotating inside the F1 region and a stationary peripheral stalk (subunits F6, b, d, and OSCP).

It localises to the mitochondrion membrane. Functionally, subunit 8, of the mitochondrial membrane ATP synthase complex (F(1)F(0) ATP synthase or Complex V) that produces ATP from ADP in the presence of a proton gradient across the membrane which is generated by electron transport complexes of the respiratory chain. ATP synthase complex consist of a soluble F(1) head domain - the catalytic core - and a membrane F(1) domain - the membrane proton channel. These two domains are linked by a central stalk rotating inside the F(1) region and a stationary peripheral stalk. During catalysis, ATP synthesis in the catalytic domain of F(1) is coupled via a rotary mechanism of the central stalk subunits to proton translocation. In vivo, can only synthesize ATP although its ATP hydrolase activity can be activated artificially in vitro. Part of the complex F(0) domain. This is ATP synthase F(0) complex subunit 8 from Lycodon semicarinatus (Ryukyu odd-tooth snake).